Reading from the N-terminus, the 349-residue chain is Heat-inducible transcription repressor HrcA (349 aa).

The protein belongs to the HrcA family.

Functionally, negative regulator of class I heat shock genes (grpE-dnaK-dnaJ and groELS operons). Prevents heat-shock induction of these operons. This Lactobacillus acidophilus (strain ATCC 700396 / NCK56 / N2 / NCFM) protein is Heat-inducible transcription repressor HrcA.